The sequence spans 280 residues: Dexamethasone-induced Ras-related protein 1 (280 aa).

Position 11 is an S-nitrosocysteine (Cys11). 31 to 38 provides a ligand contact to GTP; the sequence is GSSKVGKT. Positions 53-61 match the Effector region motif; it reads YTPTIEDFH. Residues 78 to 82 and 145 to 148 contribute to the GTP site; these read DTSGN and NKGD. Position 277 is a cysteine methyl ester (Cys277). Cys277 is lipidated: S-farnesyl cysteine. The propeptide at 278–280 is removed in mature form; that stretch reads VIS.

Belongs to the small GTPase superfamily. RasD family. As to quaternary structure, component of a complex, at least composed of APBB1, RASD1/DEXRAS1 and APP. Interacts with APBB1/FE65. Forms a ternary complex with CAPON and NOS1. Post-translationally, S-nitrosylation stimulates guanine-nucleotide exchange activity. As to expression, expressed in brain, heart, kidney and liver.

The protein localises to the cell membrane. It is found in the cytoplasm. The protein resides in the perinuclear region. It localises to the nucleus. Small GTPase. Negatively regulates the transcription regulation activity of the APBB1/FE65-APP complex via its interaction with APBB1/FE65. The protein is Dexamethasone-induced Ras-related protein 1 (Rasd1) of Mus musculus (Mouse).